Consider the following 252-residue polypeptide: tRNA (guanine-N(1)-)-methyltransferase (252 aa).

S-adenosyl-L-methionine contacts are provided by residues glycine 113 and 133–138 (IGDYVL).

This sequence belongs to the RNA methyltransferase TrmD family. Homodimer.

It is found in the cytoplasm. The enzyme catalyses guanosine(37) in tRNA + S-adenosyl-L-methionine = N(1)-methylguanosine(37) in tRNA + S-adenosyl-L-homocysteine + H(+). Specifically methylates guanosine-37 in various tRNAs. This chain is tRNA (guanine-N(1)-)-methyltransferase, found in Nitrosococcus oceani (strain ATCC 19707 / BCRC 17464 / JCM 30415 / NCIMB 11848 / C-107).